The sequence spans 851 residues: Glycogen phosphorylase, liver form (851 aa).

Alanine 2 is modified (N-acetylalanine). Serine 15 bears the Phosphoserine; by PHK; in form phosphorylase a mark. Residues 43–45 (DRN), tyrosine 76, and arginine 310 contribute to the AMP site. Lysine 364 bears the N6-succinyllysine mark. Lysine 470 carries the N6-acetyllysine modification. Residues serine 524, serine 561, and serine 639 each carry the phosphoserine modification. Lysine 681 carries the N6-(pyridoxal phosphate)lysine modification. Lysine 796 is subject to N6-acetyllysine.

This sequence belongs to the glycogen phosphorylase family. Homodimer; enzymatically active. Interacts with PPP1R3B; recruits the phosphatase PP1 which dephosphorylates and inactivates PYGL/glycogen phosphorylase. Pyridoxal 5'-phosphate serves as cofactor. Acetylation, which is up-regulated by glucose and insulin and down-regulated by glucagon, inhibits the glycogen phosphorylase activity by promoting PPP1R3B-mediated recruitment of phosphatase PP1 and Ser-15 dephosphorylation. In terms of processing, phosphorylation at Ser-15 converts inactive phosphorylase b into active phosphorylase a. Dephosphorylation of Ser-15 by phosphatase PP1 inactivates the enzyme.

The protein resides in the cytoplasm. It localises to the cytosol. The enzyme catalyses [(1-&gt;4)-alpha-D-glucosyl](n) + phosphate = [(1-&gt;4)-alpha-D-glucosyl](n-1) + alpha-D-glucose 1-phosphate. With respect to regulation, allosterically regulated through the non-covalent binding of metabolites, being activated by AMP and inhibited by ATP, ADP, and glucose-6-phosphate. The activity is also controlled by post-translational modifications including phosphorylation and acetylation. Its function is as follows. Allosteric enzyme that catalyzes the rate-limiting step in glycogen catabolism, the phosphorolytic cleavage of glycogen to produce glucose-1-phosphate, and plays a central role in maintaining cellular and organismal glucose homeostasis. The protein is Glycogen phosphorylase, liver form of Bos taurus (Bovine).